The primary structure comprises 155 residues: Ribosomal RNA large subunit methyltransferase H (155 aa).

S-adenosyl-L-methionine contacts are provided by residues L72, G103, and 122 to 127 (FGRMVW).

Belongs to the RNA methyltransferase RlmH family. Homodimer.

It is found in the cytoplasm. It carries out the reaction pseudouridine(1915) in 23S rRNA + S-adenosyl-L-methionine = N(3)-methylpseudouridine(1915) in 23S rRNA + S-adenosyl-L-homocysteine + H(+). Functionally, specifically methylates the pseudouridine at position 1915 (m3Psi1915) in 23S rRNA. The chain is Ribosomal RNA large subunit methyltransferase H from Paracoccus denitrificans (strain Pd 1222).